Here is a 311-residue protein sequence, read N- to C-terminus: Formimidoylglutamase (311 aa).

Mn(2+) is bound by residues His-122, Asp-151, His-153, Asp-155, Cys-242, and Asp-244.

It belongs to the arginase family. In terms of assembly, homodimer. Mn(2+) serves as cofactor.

The catalysed reaction is N-formimidoyl-L-glutamate + H2O = formamide + L-glutamate. The protein operates within amino-acid degradation; L-histidine degradation into L-glutamate; L-glutamate from N-formimidoyl-L-glutamate (hydrolase route): step 1/1. Catalyzes the conversion of N-formimidoyl-L-glutamate to L-glutamate and formamide. This chain is Formimidoylglutamase, found in Pseudomonas aeruginosa (strain ATCC 15692 / DSM 22644 / CIP 104116 / JCM 14847 / LMG 12228 / 1C / PRS 101 / PAO1).